The chain runs to 127 residues: Small ribosomal subunit protein uS11 (127 aa).

It belongs to the universal ribosomal protein uS11 family. In terms of assembly, part of the 30S ribosomal subunit. Interacts with proteins S7 and S18. Binds to IF-3.

Located on the platform of the 30S subunit, it bridges several disparate RNA helices of the 16S rRNA. Forms part of the Shine-Dalgarno cleft in the 70S ribosome. This Rickettsia felis (strain ATCC VR-1525 / URRWXCal2) (Rickettsia azadi) protein is Small ribosomal subunit protein uS11.